A 471-amino-acid chain; its full sequence is Alpha-amylase (471 aa).

Gln1 carries the post-translational modification Pyrrolidone carboxylic acid. Cys28 and Cys84 are oxidised to a cystine. Residues Asn98, Arg146, and Asp155 each coordinate Ca(2+). A disulfide bridge links Cys134 with Cys148. Arg183 is a binding site for chloride. Asp185 functions as the Nucleophile in the catalytic mechanism. His189 serves as a coordination point for Ca(2+). Glu222 (proton donor) is an active-site residue. Chloride-binding residues include Asn285 and Arg321. Residues 326–343 are compositionally biased toward polar residues; it reads FDFTDNDQGPPQDGSGNL. Residues 326 to 346 are disordered; it reads FDFTDNDQGPPQDGSGNLISP. Disulfide bonds link Cys354–Cys360 and Cys425–Cys437.

It belongs to the glycosyl hydrolase 13 family. In terms of assembly, monomer. It depends on Ca(2+) as a cofactor. Chloride serves as cofactor.

It carries out the reaction Endohydrolysis of (1-&gt;4)-alpha-D-glucosidic linkages in polysaccharides containing three or more (1-&gt;4)-alpha-linked D-glucose units.. The protein is Alpha-amylase of Tenebrio molitor (Yellow mealworm beetle).